A 314-amino-acid polypeptide reads, in one-letter code: Ribosomal RNA small subunit methyltransferase A (314 aa).

Residues Asn29, Val31, Gly56, Glu77, Asp107, and Asn126 each coordinate S-adenosyl-L-methionine. The tract at residues 291–314 (PKADDAGDDADAQAKADGAQVSTL) is disordered. Residues 303 to 314 (QAKADGAQVSTL) show a composition bias toward low complexity.

The protein belongs to the class I-like SAM-binding methyltransferase superfamily. rRNA adenine N(6)-methyltransferase family. RsmA subfamily.

It is found in the cytoplasm. The enzyme catalyses adenosine(1518)/adenosine(1519) in 16S rRNA + 4 S-adenosyl-L-methionine = N(6)-dimethyladenosine(1518)/N(6)-dimethyladenosine(1519) in 16S rRNA + 4 S-adenosyl-L-homocysteine + 4 H(+). Specifically dimethylates two adjacent adenosines (A1518 and A1519) in the loop of a conserved hairpin near the 3'-end of 16S rRNA in the 30S particle. May play a critical role in biogenesis of 30S subunits. The protein is Ribosomal RNA small subunit methyltransferase A of Mycolicibacterium gilvum (strain PYR-GCK) (Mycobacterium gilvum (strain PYR-GCK)).